The chain runs to 179 residues: MATLYDYYKSKVITQLMHELNYSSVMQVPKIDKITLNMGVGGAASDKKILDNAILDLTAISGQKPLITKARKSVAGFKIRQGYPIGCKVTLRGQKKWHFFERLIIIAVPRIRDFRGLSSHSFDGQGNYSLGIREQIIFPEIDYDKIDRVRGLDITITTTAKSNHEARLLLSAFNFPFRK.

It belongs to the universal ribosomal protein uL5 family. In terms of assembly, part of the 50S ribosomal subunit; part of the 5S rRNA/L5/L18/L25 subcomplex. Contacts the 5S rRNA and the P site tRNA. Forms a bridge to the 30S subunit in the 70S ribosome.

This is one of the proteins that bind and probably mediate the attachment of the 5S RNA into the large ribosomal subunit, where it forms part of the central protuberance. In the 70S ribosome it contacts protein S13 of the 30S subunit (bridge B1b), connecting the 2 subunits; this bridge is implicated in subunit movement. Contacts the P site tRNA; the 5S rRNA and some of its associated proteins might help stabilize positioning of ribosome-bound tRNAs. The polypeptide is Large ribosomal subunit protein uL5 (Buchnera aphidicola subsp. Acyrthosiphon pisum (strain APS) (Acyrthosiphon pisum symbiotic bacterium)).